The chain runs to 946 residues: Glycine dehydrogenase (decarboxylating) (946 aa).

Position 700 is an N6-(pyridoxal phosphate)lysine (lysine 700).

This sequence belongs to the GcvP family. In terms of assembly, the glycine cleavage system is composed of four proteins: P, T, L and H. Pyridoxal 5'-phosphate is required as a cofactor.

The enzyme catalyses N(6)-[(R)-lipoyl]-L-lysyl-[glycine-cleavage complex H protein] + glycine + H(+) = N(6)-[(R)-S(8)-aminomethyldihydrolipoyl]-L-lysyl-[glycine-cleavage complex H protein] + CO2. In terms of biological role, the glycine cleavage system catalyzes the degradation of glycine. The P protein binds the alpha-amino group of glycine through its pyridoxal phosphate cofactor; CO(2) is released and the remaining methylamine moiety is then transferred to the lipoamide cofactor of the H protein. The protein is Glycine dehydrogenase (decarboxylating) of Pseudomonas fluorescens (strain SBW25).